The following is a 208-amino-acid chain: Methenyltetrahydrofolate cyclohydrolase (208 aa).

Residues 25-46 form a helical membrane-spanning segment; that stretch reads GAAAISGAMGAALVSMVCNLTI.

Belongs to the cyclodeaminase/cyclohydrolase family. In terms of assembly, homodimer.

It is found in the membrane. It carries out the reaction (6R)-5,10-methenyltetrahydrofolate + H2O = (6R)-10-formyltetrahydrofolate + H(+). It functions in the pathway one-carbon metabolism; formaldehyde assimilation via serine pathway. Its function is as follows. Required for both C1 and C2 metabolism. The polypeptide is Methenyltetrahydrofolate cyclohydrolase (fchA) (Methylorubrum extorquens (strain ATCC 14718 / DSM 1338 / JCM 2805 / NCIMB 9133 / AM1) (Methylobacterium extorquens)).